The sequence spans 95 residues: Protein TusB (95 aa).

The protein belongs to the DsrH/TusB family. In terms of assembly, heterohexamer, formed by a dimer of trimers. The hexameric TusBCD complex contains 2 copies each of TusB, TusC and TusD. The TusBCD complex interacts with TusE.

Its subcellular location is the cytoplasm. Functionally, part of a sulfur-relay system required for 2-thiolation of 5-methylaminomethyl-2-thiouridine (mnm(5)s(2)U) at tRNA wobble positions. This Pectobacterium parmentieri protein is Protein TusB.